The following is a 576-amino-acid chain: Glutamine--tRNA ligase (576 aa).

Positions 47–57 match the 'HIGH' region motif; it reads PEPNGYLHIGH. Residues 48-50 and 54-60 contribute to the ATP site; these read EPN and HIGHAKS. Residues aspartate 80 and tyrosine 229 each contribute to the L-glutamine site. Residues threonine 248 and 283–284 contribute to the ATP site; that span reads RL. The 'KMSKS' region signature appears at 290-294; sequence ITSKR.

This sequence belongs to the class-I aminoacyl-tRNA synthetase family. As to quaternary structure, monomer.

Its subcellular location is the cytoplasm. It catalyses the reaction tRNA(Gln) + L-glutamine + ATP = L-glutaminyl-tRNA(Gln) + AMP + diphosphate. The polypeptide is Glutamine--tRNA ligase (Ralstonia pickettii (strain 12J)).